The following is a 475-amino-acid chain: Cytosolic non-specific dipeptidase (475 aa).

Ala-2 carries the N-acetylalanine modification. Lys-9 is subject to N6-acetyllysine. The residue at position 58 (Ser-58) is a Phosphoserine. A Mn(2+)-binding site is contributed by His-99. The active site involves Asp-101. Residue Asp-132 participates in Mn(2+) binding. Glu-166 functions as the Proton acceptor in the catalytic mechanism. Substrate-binding positions include 166-167 (EE), Asp-195, and His-228. Mn(2+) contacts are provided by Glu-167 and Asp-195. The residue at position 299 (Ser-299) is a Phosphoserine. Substrate contacts are provided by Thr-330, Arg-343, Ser-417, and His-445. His-445 is a Mn(2+) binding site.

Belongs to the peptidase M20A family. In terms of assembly, homodimer. The cofactor is Mn(2+).

The protein localises to the cytoplasm. The catalysed reaction is Hydrolysis of dipeptides, preferentially hydrophobic dipeptides including prolyl amino acids.. The enzyme catalyses L-threonyl-L-threonine + H2O = 2 L-threonine. It carries out the reaction L-threonyl-L-serine + H2O = L-threonine + L-serine. It catalyses the reaction L-seryl-L-threonine + H2O = L-threonine + L-serine. The catalysed reaction is L-cysteinylglycine + H2O = L-cysteine + glycine. The enzyme catalyses (S)-lactate + L-phenylalanine = N-[(S)-lactoyl]-L-phenylalanine + H2O. Functionally, catalyzes the peptide bond hydrolysis in dipeptides, displaying a non-redundant activity toward threonyl dipeptides. Mediates threonyl dipeptide catabolism in a tissue-specific way. Has high dipeptidase activity toward cysteinylglycine, an intermediate metabolite in glutathione metabolism. Metabolizes N-lactoyl-amino acids, both through hydrolysis to form lactic acid and amino acids, as well as through their formation by reverse proteolysis. Plays a role in the regulation of cell cycle arrest and apoptosis. The sequence is that of Cytosolic non-specific dipeptidase (CNDP2) from Pongo abelii (Sumatran orangutan).